We begin with the raw amino-acid sequence, 357 residues long: Histidine biosynthesis bifunctional protein HisB (357 aa).

The interval 1–168 (MTPILFIDRD…GIAHALADAP (168 aa)) is histidinol-phosphatase. D8 functions as the Nucleophile in the catalytic mechanism. Residues D8, D10, and D128 each contribute to the Mg(2+) site. D10 serves as the catalytic Proton donor. An imidazoleglycerol-phosphate dehydratase region spans residues 169–357 (RTAVVQRDTK…TALPSTKGAL (189 aa)).

This sequence in the N-terminal section; belongs to the histidinol-phosphatase family. The protein in the C-terminal section; belongs to the imidazoleglycerol-phosphate dehydratase family. It depends on Mg(2+) as a cofactor.

It is found in the cytoplasm. It carries out the reaction D-erythro-1-(imidazol-4-yl)glycerol 3-phosphate = 3-(imidazol-4-yl)-2-oxopropyl phosphate + H2O. It catalyses the reaction L-histidinol phosphate + H2O = L-histidinol + phosphate. It functions in the pathway amino-acid biosynthesis; L-histidine biosynthesis; L-histidine from 5-phospho-alpha-D-ribose 1-diphosphate: step 6/9. It participates in amino-acid biosynthesis; L-histidine biosynthesis; L-histidine from 5-phospho-alpha-D-ribose 1-diphosphate: step 8/9. The chain is Histidine biosynthesis bifunctional protein HisB from Stenotrophomonas maltophilia (strain K279a).